The chain runs to 291 residues: MEAPASAQTPHPHEPISFGIDQILNSPDQDSAPAPRGPDGASYLGGPPGGRPGATYPSLPASFAGLGAPFEDAGSYSVNLSLAPAGVIRVPAHRPLPGAVPPPLPSALPAMPSVPTVSSLGGLNFPWMESSRRFVKDRFTAAAALTPFTVTRRIGHPYQNRTPPKRKKPRTSFSRVQICELEKRFHRQKYLASAERAALAKSLKMTDAQVKTWFQNRRTKWRRQTAEEREAERQQASRLMLQLQHDAFQKSLNDSIQPDPLCLHNSSLFALQNLQPWEEDSSKVPAVTSLV.

A disordered region spans residues 1-56 (MEAPASAQTPHPHEPISFGIDQILNSPDQDSAPAPRGPDGASYLGGPPGGRPGATY). Positions 166–225 (RKKPRTSFSRVQICELEKRFHRQKYLASAERAALAKSLKMTDAQVKTWFQNRRTKWRRQT) form a DNA-binding region, homeobox.

The protein resides in the nucleus. The polypeptide is T-cell leukemia homeobox protein 3 (TLX3) (Homo sapiens (Human)).